A 464-amino-acid polypeptide reads, in one-letter code: Cerebellar degeneration-related protein 2-like (464 aa).

Coiled coils occupy residues 31–154 (AAEL…RRKT), 201–264 (VSSL…KSRV), and 342–379 (MSIL…AEVQ). The interval 371-419 (ESLRHAEVQTSRPVSRDPSMKECRVAEPQQPPPTPPQTPSTPEALEGIS) is disordered. Positions 384 to 395 (VSRDPSMKECRV) are enriched in basic and acidic residues. A compositionally biased stretch (pro residues) spans 399–409 (QQPPPTPPQTP).

It belongs to the CDR2 family.

In Danio rerio (Zebrafish), this protein is Cerebellar degeneration-related protein 2-like (cdr2l).